A 155-amino-acid polypeptide reads, in one-letter code: MAIKTNEGKLIASGLKFGVVVARFNEFISSKLLGGVIDGLIRHGASEEDIEISWVPGAFEIPLVAQKMANSKKFDAIICIGAVIRGSTPHFDYVANEMSKGIAKVSLDTGIPIAFGVLTTDTIEQAIERAGTKVGNKGYDAAVTAIEMANLLKMI.

5-amino-6-(D-ribitylamino)uracil-binding positions include phenylalanine 24, 58–60 (AFE), and 82–84 (AVI). Residue 87–88 (ST) coordinates (2S)-2-hydroxy-3-oxobutyl phosphate. Histidine 90 functions as the Proton donor in the catalytic mechanism. Phenylalanine 115 is a binding site for 5-amino-6-(D-ribitylamino)uracil. (2S)-2-hydroxy-3-oxobutyl phosphate is bound at residue arginine 129.

It belongs to the DMRL synthase family.

It carries out the reaction (2S)-2-hydroxy-3-oxobutyl phosphate + 5-amino-6-(D-ribitylamino)uracil = 6,7-dimethyl-8-(1-D-ribityl)lumazine + phosphate + 2 H2O + H(+). It functions in the pathway cofactor biosynthesis; riboflavin biosynthesis; riboflavin from 2-hydroxy-3-oxobutyl phosphate and 5-amino-6-(D-ribitylamino)uracil: step 1/2. Catalyzes the formation of 6,7-dimethyl-8-ribityllumazine by condensation of 5-amino-6-(D-ribitylamino)uracil with 3,4-dihydroxy-2-butanone 4-phosphate. This is the penultimate step in the biosynthesis of riboflavin. This is 6,7-dimethyl-8-ribityllumazine synthase from Acetivibrio thermocellus (strain ATCC 27405 / DSM 1237 / JCM 9322 / NBRC 103400 / NCIMB 10682 / NRRL B-4536 / VPI 7372) (Clostridium thermocellum).